The chain runs to 137 residues: Golgin subfamily A member 7 (137 aa).

S-palmitoyl cysteine attachment occurs at residues Cys-69 and Cys-72.

The protein belongs to the ERF4 family. Interacts with GOLGA3. Interacts with ZDHHC9. In terms of processing, palmitoylated on Cys-69 and Cys-72; which is required for Golgi localization and interaction with GOLGA3.

It localises to the golgi apparatus membrane. Its function is as follows. May be involved in protein transport from Golgi to cell surface. The ZDHHC9-GOLGA7 complex is a palmitoyltransferase specific for HRAS and NRAS. The chain is Golgin subfamily A member 7 (Golga7) from Rattus norvegicus (Rat).